The primary structure comprises 562 residues: Carboxylesterase 1E (562 aa).

Positions 1-19 (MCLSALILVSLAAFTAGAG) are cleaved as a signal peptide. N-linked (GlcNAc...) asparagine glycosylation is present at N80. An intrachain disulfide couples C88 to C117. The active-site Acyl-ester intermediate is the S222. Cysteines 274 and 285 form a disulfide. N276 is a glycosylation site (N-linked (GlcNAc...) asparagine). Residues E354 and H467 each act as charge relay system in the active site. N-linked (GlcNAc...) asparagine glycosylation occurs at N490. A Prevents secretion from ER motif is present at residues 559-562 (HTEL).

Belongs to the type-B carboxylesterase/lipase family.

Its subcellular location is the endoplasmic reticulum lumen. It localises to the microsome membrane. The enzyme catalyses a carboxylic ester + H2O = an alcohol + a carboxylate + H(+). It carries out the reaction all-trans-retinyl hexadecanoate + H2O = all-trans-retinol + hexadecanoate + H(+). In terms of biological role, involved in the detoxification of xenobiotics and in the activation of ester and amide prodrugs. Hydrolyzes retinyl esters. The polypeptide is Carboxylesterase 1E (Mus musculus (Mouse)).